The sequence spans 373 residues: Ubiquitin domain-containing protein DSK2 (373 aa).

Positions 1-76 (MSLNIHIKSG…SVHLVKSQPK (76 aa)) constitute a Ubiquitin-like domain. Glycyl lysine isopeptide (Lys-Gly) (interchain with G-Cter in ubiquitin) cross-links involve residues lysine 13 and lysine 76. Positions 221–270 (DPNAGMGSAGGAASAFPAPGGDAPEEGSNTNTTSSSNTGNNAGTNAGTNA) are disordered. Residues 231–270 (GAASAFPAPGGDAPEEGSNTNTTSSSNTGNNAGTNAGTNA) show a composition bias toward low complexity. In terms of domain architecture, UBA spans 327–371 (PPEERYEHQLRQLNDMGFFDFDRNVAALRRSGGSVQGALDSLLNG).

The protein localises to the nucleus. Its function is as follows. Involved, with RAD23 in spindle pole body duplication. Involved in the ubiquitin-proteasome proteolytic pathway. In Saccharomyces cerevisiae (strain ATCC 204508 / S288c) (Baker's yeast), this protein is Ubiquitin domain-containing protein DSK2 (DSK2).